The chain runs to 294 residues: Bifunctional protein FolD 1 (294 aa).

NADP(+)-binding positions include 165–167 (GRS), Ser-190, and Thr-231.

Belongs to the tetrahydrofolate dehydrogenase/cyclohydrolase family. As to quaternary structure, homodimer.

It carries out the reaction (6R)-5,10-methylene-5,6,7,8-tetrahydrofolate + NADP(+) = (6R)-5,10-methenyltetrahydrofolate + NADPH. It catalyses the reaction (6R)-5,10-methenyltetrahydrofolate + H2O = (6R)-10-formyltetrahydrofolate + H(+). Its pathway is one-carbon metabolism; tetrahydrofolate interconversion. In terms of biological role, catalyzes the oxidation of 5,10-methylenetetrahydrofolate to 5,10-methenyltetrahydrofolate and then the hydrolysis of 5,10-methenyltetrahydrofolate to 10-formyltetrahydrofolate. This Paenarthrobacter aurescens (strain TC1) protein is Bifunctional protein FolD 1.